A 78-amino-acid chain; its full sequence is Acyl carrier protein (78 aa).

A Carrier domain is found at serine 2–leucine 77. Residue serine 37 is modified to O-(pantetheine 4'-phosphoryl)serine.

It belongs to the acyl carrier protein (ACP) family. Post-translationally, 4'-phosphopantetheine is transferred from CoA to a specific serine of apo-ACP by AcpS. This modification is essential for activity because fatty acids are bound in thioester linkage to the sulfhydryl of the prosthetic group.

The protein localises to the cytoplasm. The protein operates within lipid metabolism; fatty acid biosynthesis. In terms of biological role, carrier of the growing fatty acid chain in fatty acid biosynthesis. This Hydrogenovibrio crunogenus (strain DSM 25203 / XCL-2) (Thiomicrospira crunogena) protein is Acyl carrier protein.